The following is a 290-amino-acid chain: Zinc-finger homeodomain protein 2 (290 aa).

Residues Met-1 to Met-15 are compositionally biased toward acidic residues. The segment at Met-1 to Gly-59 is disordered. Over residues Gly-31 to Gly-59 the composition is skewed to gly residues. A ZF-HD dimerization-type; degenerate zinc finger spans residues Tyr-63–Glu-112. A DNA-binding region (homeobox) is located at residues Lys-226–Ala-289.

As to quaternary structure, homo- and heterodimer with other ZFHD proteins.

It is found in the nucleus. Putative transcription factor. The sequence is that of Zinc-finger homeodomain protein 2 (ZHD2) from Oryza sativa subsp. japonica (Rice).